The sequence spans 194 residues: uncharacterized protein (194 aa).

Residues 6–66 (SGKYEKILQA…AIAENLLTHT (61 aa)) enclose the HTH tetR-type domain. The H-T-H motif DNA-binding region spans 29 to 48 (SISDIVKKAGTAQGTFYLYF).

This is an uncharacterized protein from Bacillus subtilis (strain 168).